The chain runs to 104 residues: Pyrimidine/purine nucleoside phosphorylase (104 aa).

This sequence belongs to the nucleoside phosphorylase PpnP family.

It carries out the reaction a purine D-ribonucleoside + phosphate = a purine nucleobase + alpha-D-ribose 1-phosphate. It catalyses the reaction adenosine + phosphate = alpha-D-ribose 1-phosphate + adenine. The catalysed reaction is cytidine + phosphate = cytosine + alpha-D-ribose 1-phosphate. The enzyme catalyses guanosine + phosphate = alpha-D-ribose 1-phosphate + guanine. It carries out the reaction inosine + phosphate = alpha-D-ribose 1-phosphate + hypoxanthine. It catalyses the reaction thymidine + phosphate = 2-deoxy-alpha-D-ribose 1-phosphate + thymine. The catalysed reaction is uridine + phosphate = alpha-D-ribose 1-phosphate + uracil. The enzyme catalyses xanthosine + phosphate = alpha-D-ribose 1-phosphate + xanthine. Its function is as follows. Catalyzes the phosphorolysis of diverse nucleosides, yielding D-ribose 1-phosphate and the respective free bases. Can use uridine, adenosine, guanosine, cytidine, thymidine, inosine and xanthosine as substrates. Also catalyzes the reverse reactions. The chain is Pyrimidine/purine nucleoside phosphorylase from Geobacter sulfurreducens (strain ATCC 51573 / DSM 12127 / PCA).